Reading from the N-terminus, the 133-residue chain is Holo-[acyl-carrier-protein] synthase (133 aa).

Positions 8 and 57 each coordinate Mg(2+).

The protein belongs to the P-Pant transferase superfamily. AcpS family. The cofactor is Mg(2+).

The protein localises to the cytoplasm. It catalyses the reaction apo-[ACP] + CoA = holo-[ACP] + adenosine 3',5'-bisphosphate + H(+). Its function is as follows. Transfers the 4'-phosphopantetheine moiety from coenzyme A to a Ser of acyl-carrier-protein. This is Holo-[acyl-carrier-protein] synthase from Bartonella henselae (strain ATCC 49882 / DSM 28221 / CCUG 30454 / Houston 1) (Rochalimaea henselae).